A 214-amino-acid chain; its full sequence is Cytochrome c biogenesis ATP-binding export protein CcmA (214 aa).

Residues 12 to 214 form the ABC transporter domain; sequence LAARALAFSR…TRMLTLEAAA (203 aa). 44–51 contributes to the ATP binding site; that stretch reads GDNGAGKT.

The protein belongs to the ABC transporter superfamily. CcmA exporter (TC 3.A.1.107) family. As to quaternary structure, the complex is composed of two ATP-binding proteins (CcmA) and two transmembrane proteins (CcmB).

The protein localises to the cell inner membrane. The catalysed reaction is heme b(in) + ATP + H2O = heme b(out) + ADP + phosphate + H(+). Functionally, part of the ABC transporter complex CcmAB involved in the biogenesis of c-type cytochromes; once thought to export heme, this seems not to be the case, but its exact role is uncertain. Responsible for energy coupling to the transport system. The sequence is that of Cytochrome c biogenesis ATP-binding export protein CcmA from Xanthomonas campestris pv. campestris (strain 8004).